The sequence spans 797 residues: Xaa-Pro dipeptidyl-peptidase (797 aa).

Residues Ser370, Asp490, and His521 each act as charge relay system in the active site.

This sequence belongs to the peptidase S15 family. As to quaternary structure, homodimer.

The protein localises to the cytoplasm. The catalysed reaction is Hydrolyzes Xaa-Pro-|- bonds to release unblocked, N-terminal dipeptides from substrates including Ala-Pro-|-p-nitroanilide and (sequentially) Tyr-Pro-|-Phe-Pro-|-Gly-Pro-|-Ile.. In terms of biological role, removes N-terminal dipeptides sequentially from polypeptides having unsubstituted N-termini provided that the penultimate residue is proline. This chain is Xaa-Pro dipeptidyl-peptidase, found in Lacticaseibacillus paracasei (strain ATCC 334 / BCRC 17002 / CCUG 31169 / CIP 107868 / KCTC 3260 / NRRL B-441) (Lactobacillus paracasei).